Consider the following 265-residue polypeptide: Undecaprenyl-diphosphatase (265 aa).

7 helical membrane passes run 42 to 62 (EAIP…IVYF), 90 to 110 (ISFL…LLLF), 115 to 135 (VEIS…VTGI), 160 to 182 (VAQG…ALLL), 195 to 215 (FLMS…MGMV), 222 to 242 (IVGL…FLKV), and 245 to 265 (KVDF…TMFL).

Belongs to the UppP family.

Its subcellular location is the cell membrane. The enzyme catalyses di-trans,octa-cis-undecaprenyl diphosphate + H2O = di-trans,octa-cis-undecaprenyl phosphate + phosphate + H(+). Catalyzes the dephosphorylation of undecaprenyl diphosphate (UPP). The sequence is that of Undecaprenyl-diphosphatase from Methanococcoides burtonii (strain DSM 6242 / NBRC 107633 / OCM 468 / ACE-M).